The sequence spans 247 residues: Adenosylcobinamide-GDP ribazoletransferase (247 aa).

A run of 5 helical transmembrane segments spans residues 1-21, 37-57, 61-81, 109-129, and 176-196; these read MLRLYFVALQFLAIIPIPFSF, LVGLTLGLLLAGCDYLLALAL, VADLLLVAILALVTGALHLDG, AVGVVGLVLALLLKYQALFAV, and VAVAAFFTVVTGWLLLGLPGI.

This sequence belongs to the CobS family. Mg(2+) serves as cofactor.

It is found in the cell inner membrane. The enzyme catalyses alpha-ribazole + adenosylcob(III)inamide-GDP = adenosylcob(III)alamin + GMP + H(+). The catalysed reaction is alpha-ribazole 5'-phosphate + adenosylcob(III)inamide-GDP = adenosylcob(III)alamin 5'-phosphate + GMP + H(+). Its pathway is cofactor biosynthesis; adenosylcobalamin biosynthesis; adenosylcobalamin from cob(II)yrinate a,c-diamide: step 7/7. Joins adenosylcobinamide-GDP and alpha-ribazole to generate adenosylcobalamin (Ado-cobalamin). Also synthesizes adenosylcobalamin 5'-phosphate from adenosylcobinamide-GDP and alpha-ribazole 5'-phosphate. This is Adenosylcobinamide-GDP ribazoletransferase from Geotalea daltonii (strain DSM 22248 / JCM 15807 / FRC-32) (Geobacter daltonii).